The following is a 585-amino-acid chain: Involucrin (585 aa).

The segment covering 1-15 has biased composition (polar residues); that stretch reads MSQQHTLPVTLSPAL. Residues 1-132 are disordered; sequence MSQQHTLPVT…LEEEKKLLDQ (132 aa). Glutamine 79 carries Omega-hydroxyceramide glutamate ester lipidation. Over residues 92–115 the composition is skewed to basic and acidic residues; sequence WEQHEEYQKAENPEQQLKQEKTQR. Residues glutamine 118 and glutamine 133 are each lipidated (omega-hydroxyceramide glutamate ester). The disordered stretch occupies residues 149–540; sequence KEQLLELPEQ…KDLEQQKGQL (392 aa). 23 consecutive repeat copies span residues 153–162, 163–172, 173–182, 183–192, 193–202, 203–212, 213–222, 223–232, 233–242, 243–252, 253–262, 263–272, 273–282, 283–292, 293–302, 303–312, 313–322, 323–332, 333–342, 343–352, 353–362, 363–372, and 373–382. Residues 153 to 542 are 39 X 10 AA approximate tandem repeats of [LP]-[EKG]-[LHVYQEK]-[PLSQE]-[EQDV]-[QHEKRGA]-Q-[EMVQLP]-[GKLE]-[QHVNLD]; that stretch reads LELPEQQEGH…LEQQKGQLEQ (390 aa). The segment covering 159 to 178 has biased composition (basic and acidic residues); the sequence is QEGHLKHLEQQEGQLKHPEQ. Residues 179-261 show a composition bias toward low complexity; it reads QEGQLELPEQ…QLELSEQQEG (83 aa). Basic and acidic residues predominate over residues 262 to 271; it reads QLKHLEHQEG. 3 stretches are compositionally biased toward basic and acidic residues: residues 292-304, 314-328, and 341-360; these read QLKHLDQQEKQPE, KHLEQQEGQPKHLEQ, and GQLKHLEQQEGQLEHLEHQE. Low complexity predominate over residues 361 to 383; that stretch reads GQLGLPEQQVLQLKQLEKQQGQP. A 24; approximate repeat occupies 383–392; sequence PKHLEEEEGQ. A compositionally biased stretch (basic and acidic residues) spans 384–393; that stretch reads KHLEEEEGQL. Repeat copies occupy residues 393–402, 403–412, 413–422, 423–432, 433–442, 443–452, 453–462, 463–472, 473–482, 483–492, and 493–502. Basic and acidic residues-rich tracts occupy residues 415 to 424 and 431 to 444; these read QQERQVEHLE and KHLEEQEGQLKHLE. Residues 445–462 are compositionally biased toward low complexity; that stretch reads QQQGQLEVPEQQVGQPKN. Residues 479 to 488 show a composition bias toward basic and acidic residues; sequence QVKHLEKQEA. Glutamine 496 is covalently cross-linked (Isoglutamyl lysine isopeptide (Gln-Lys) (interchain with K-? in other proteins)). A compositionally biased stretch (basic and acidic residues) spans 501–535; sequence KHLEQQEKHLEHPEQQDGQLKHLEQQEGQLKDLEQ. The 36; approximate repeat unit spans residues 503 to 512; it reads LEQQEKHLEH. 2 tandem repeats follow at residues 513-522 and 523-532. The 39; approximate repeat unit spans residues 533 to 542; sequence LEQQKGQLEQ.

Belongs to the involucrin family. Directly or indirectly cross-linked to cornifelin (CNFN). In terms of processing, substrate of transglutaminase. Some glutamines and lysines are cross-linked to other involucrin molecules, to other proteins such as keratin, desmoplakin, periplakin and envoplakin, and to lipids like omega-hydroxyceramide. As to expression, keratinocytes of epidermis and other stratified squamous epithelia.

The protein localises to the cytoplasm. In terms of biological role, part of the insoluble cornified cell envelope (CE) of stratified squamous epithelia. The chain is Involucrin (IVL) from Homo sapiens (Human).